The chain runs to 158 residues: Putative pre-16S rRNA nuclease (158 aa).

Residues E138–S158 form a disordered region.

The protein belongs to the YqgF nuclease family.

It is found in the cytoplasm. Functionally, could be a nuclease involved in processing of the 5'-end of pre-16S rRNA. This is Putative pre-16S rRNA nuclease from Synechococcus sp. (strain CC9605).